Reading from the N-terminus, the 460-residue chain is Probable amino acid transporter skat-1 (460 aa).

Helical transmembrane passes span 64–84 (LGGLWVSFVMSFVIAGLNWYG), 132–152 (FVNVTILFYQLGMCSVAILFI), 172–192 (MILMATVSLFFILLTNMFTEM), 194–214 (IVSFFALVSSVFFVIGAAVIM), 236–256 (TITMIGMSMYAFEGQTMILPI), 270–290 (FGVLSTTMIICTAFMTALGFF), 316–336 (VNVFLMLQSLLGNSIAMYVVY), 362–382 (GFRVFWVLVTYLMAVLIPKLE), 383–403 (IMIPLVGVTSGALCALIFPPF), and 426–446 (IFINLVVMAIGVFAIIAGVYT).

This sequence belongs to the amino acid/polyamine transporter 2 family. Expressed in the head, tail, body and ventral nerve cord neurons, muscles of the vulva, and intestine.

Its subcellular location is the membrane. The protein localises to the cytoplasmic granule. Its function is as follows. Plays a role in the accumulation of vital dyes and endogenous fluorescent compounds in lysosome related organelles. Has an effect on lysosome related organelle (LRO) function, in a pathway with serotonin. This chain is Probable amino acid transporter skat-1, found in Caenorhabditis elegans.